The chain runs to 967 residues: Kinesin heavy chain (967 aa).

Residues 8–326 (NIKVICRVRP…LLFGQRAKTI (319 aa)) form the Kinesin motor domain. 85–92 (GQTSSGKT) contributes to the ATP binding site. The segment at 173–314 (VSSPEEVMEV…PASYNESETK (142 aa)) is microtubule-binding. Disordered stretches follow at residues 387 to 411 (VPAESPATSTTSLAGGLIASMNEGD) and 923 to 967 (KPIR…ESKA). Positions 392–861 (PATSTTSLAG…RDNADLRCEL (470 aa)) form a coiled coil. The tract at residues 862 to 967 (PKLEKRLRAT…PIRMAPESKA (106 aa)) is globular. The span at 949–958 (QNGPMITSTP) shows a compositional bias: polar residues.

The protein belongs to the TRAFAC class myosin-kinesin ATPase superfamily. Kinesin family. Kinesin subfamily. In terms of assembly, oligomer composed of two heavy chains and two light chains. Interacts with amyloid-beta precursor-like protein (via cytoplasmic domain).

It is found in the cytoplasm. Its subcellular location is the cytoskeleton. It localises to the cell projection. The protein localises to the axon. Kinesin is a microtubule-associated force-producing protein that may play a role in organelle transport. The sequence is that of Kinesin heavy chain from Doryteuthis pealeii (Longfin inshore squid).